Here is a 63-residue protein sequence, read N- to C-terminus: Small ribosomal subunit protein bS21 (63 aa).

The protein belongs to the bacterial ribosomal protein bS21 family.

This is Small ribosomal subunit protein bS21 from Porphyromonas gingivalis (strain ATCC 33277 / DSM 20709 / CIP 103683 / JCM 12257 / NCTC 11834 / 2561).